A 419-amino-acid chain; its full sequence is CDP-diacylglycerol--serine O-phosphatidyltransferase 3 (419 aa).

The interval 1–51 is disordered; it reads MPVRRRWYPPSSTAAQPSPDGGDVNTDDADACPSSRQQRPPSLPQHSAPIH. Over residues 33-47 the composition is skewed to low complexity; that stretch reads PSSRQQRPPSLPQHS. The next 7 helical transmembrane spans lie at 103 to 123, 142 to 162, 168 to 188, 260 to 280, 287 to 307, 359 to 379, and 384 to 404; these read PHTVSVLLAGACLLIWASGVL, WAMIAVFLAYCTLQAPSTILI, VWRLVHGMAVVYLVALTFLLF, LLLWVLSVGFELMELTFRHML, WWDSIILDIMICNWFGIWAGM, FIQVFCLCVGFMTVELNTFFL, and WIPPRNPLVVYRLILWWLIAI.

This sequence belongs to the CDP-alcohol phosphatidyltransferase class-I family.

It localises to the endoplasmic reticulum membrane. It catalyses the reaction a CDP-1,2-diacyl-sn-glycerol + L-serine = a 1,2-diacyl-sn-glycero-3-phospho-L-serine + CMP + H(+). The protein operates within phospholipid metabolism; phosphatidylethanolamine biosynthesis; phosphatidylethanolamine from CDP-diacylglycerol: step 1/2. Functionally, catalyzes a base-exchange reaction in which the polar head group of phosphatidylethanolamine (PE) or phosphatidylcholine (PC) is replaced by L-serine. This Oryza sativa subsp. japonica (Rice) protein is CDP-diacylglycerol--serine O-phosphatidyltransferase 3 (PSS3).